Consider the following 388-residue polypeptide: Chaperone protein DnaJ (388 aa).

The region spanning 5–70 (DYYEVLGVAR…QKRAAYDRFG (66 aa)) is the J domain. The CR-type zinc finger occupies 141–219 (GKTETIRLPT…CGGAGRVTRE (79 aa)). Zn(2+) is bound by residues cysteine 154, cysteine 157, cysteine 171, cysteine 174, cysteine 193, cysteine 196, cysteine 207, and cysteine 210. 4 CXXCXGXG motif repeats span residues 154–161 (CEVCAGSG), 171–178 (CPTCGGYG), 193–200 (CPNCHGRG), and 207–214 (CTACGGAG).

Belongs to the DnaJ family. In terms of assembly, homodimer. Zn(2+) is required as a cofactor.

The protein localises to the cytoplasm. Its function is as follows. Participates actively in the response to hyperosmotic and heat shock by preventing the aggregation of stress-denatured proteins and by disaggregating proteins, also in an autonomous, DnaK-independent fashion. Unfolded proteins bind initially to DnaJ; upon interaction with the DnaJ-bound protein, DnaK hydrolyzes its bound ATP, resulting in the formation of a stable complex. GrpE releases ADP from DnaK; ATP binding to DnaK triggers the release of the substrate protein, thus completing the reaction cycle. Several rounds of ATP-dependent interactions between DnaJ, DnaK and GrpE are required for fully efficient folding. Also involved, together with DnaK and GrpE, in the DNA replication of plasmids through activation of initiation proteins. This chain is Chaperone protein DnaJ, found in Methylobacterium nodulans (strain LMG 21967 / CNCM I-2342 / ORS 2060).